We begin with the raw amino-acid sequence, 78 residues long: Large ribosomal subunit protein bL28 (78 aa).

This sequence belongs to the bacterial ribosomal protein bL28 family.

This chain is Large ribosomal subunit protein bL28, found in Colwellia psychrerythraea (strain 34H / ATCC BAA-681) (Vibrio psychroerythus).